A 141-amino-acid chain; its full sequence is Ly6/PLAUR domain-containing protein 1 (141 aa).

An N-terminal signal peptide occupies residues 1–20; that stretch reads MWVLGIAATFCGLFWLPGLA. Disulfide bonds link C25-C54, C28-C37, C46-C71, C77-C100, C88-C97, and C101-C106. In terms of domain architecture, UPAR/Ly6 spans 25–108; sequence CYQCEEFQLN…SCCNTPLCNG (84 aa). The N-linked (GlcNAc...) asparagine glycan is linked to N45. The GPI-anchor amidated glycine moiety is linked to residue G115. Residues 116–141 constitute a propeptide, removed in mature form; that stretch reads SSASAIRPELFTTVLFFNLALCLAHC.

As to quaternary structure, interacts with CHRNA4 and nAChRs containing alpha-4:beta-2 (CHRNA4:CHRNB2) and alpha-7 (CHRNA7) subunits.

It localises to the cell membrane. Its function is as follows. Believed to act as a modulator of nicotinic acetylcholine receptors (nAChRs) activity. In vitro increases receptor desensitization and decreases affinity for ACh of alpha-4:beta-2-containing nAChRs. May play a role in the intracellular trafficking of alpha-4:beta-2 and alpha-7-containing nAChRs and may inhibit their expression at the cell surface. May be involved in the control of anxiety. The polypeptide is Ly6/PLAUR domain-containing protein 1 (Lypd1) (Rattus norvegicus (Rat)).